Here is a 303-residue protein sequence, read N- to C-terminus: UDP-N-acetylenolpyruvoylglucosamine reductase (303 aa).

Residues 27-217 enclose the FAD-binding PCMH-type domain; it reads KVGGISQVFY…QTVRKLTQPI (191 aa). The active site involves Arg175. The active-site Proton donor is Ser224. The active site involves Glu294.

This sequence belongs to the MurB family. The cofactor is FAD.

It localises to the cytoplasm. It catalyses the reaction UDP-N-acetyl-alpha-D-muramate + NADP(+) = UDP-N-acetyl-3-O-(1-carboxyvinyl)-alpha-D-glucosamine + NADPH + H(+). The protein operates within cell wall biogenesis; peptidoglycan biosynthesis. Its function is as follows. Cell wall formation. The chain is UDP-N-acetylenolpyruvoylglucosamine reductase from Orientia tsutsugamushi (strain Ikeda) (Rickettsia tsutsugamushi).